The chain runs to 173 residues: T-cell surface glycoprotein CD3 gamma chain (173 aa).

Residues 1-22 (MEQGKHLAGLILAVFLLQGTMA) form the signal peptide. Over 23-111 (HVKEVKVDDN…NCIELNPSTV (89 aa)) the chain is Extracellular. In terms of domain architecture, Ig-like spans 24-94 (VKEVKVDDNR…GSNNQSKSLQ (71 aa)). A disulfide bridge links Cys42 with Cys83. N-linked (GlcNAc...) asparagine glycosylation is found at Asn45 and Asn88. Residues 112–132 (AGFIFTEIVSIFLLAVGVYFI) form a helical membrane-spanning segment. Residues 133-173 (AGQEGVRQSRASDKQTLLNNDQLYQPLKEREDDQYSHLRKN) are Cytoplasmic-facing. Ser141 bears the Phosphoserine mark. The residue at position 144 (Ser144) is a Phosphoserine; by PKC. An ITAM domain is found at 145–173 (DKQTLLNNDQLYQPLKEREDDQYSHLRKN). The Di-leucine motif signature appears at 149 to 150 (LL).

The TCR-CD3 complex is composed of a CD3D/CD3E and a CD3G/CD3E heterodimers that preferentially associate with TCRalpha and TCRbeta, respectively, to form TCRalpha/CD3E/CD3G and TCRbeta/CD3G/CD3E trimers. In turn, the hexamer interacts with CD3Z homodimer to form the TCR-CD3 complex. Alternatively, TCRalpha and TCRbeta can be replaced by TCRgamma and TCRdelta. Post-translationally, phosphorylated on Tyr residues after T-cell receptor triggering by LCK in association with CD4/CD8. Phosphorylated also by PKC; leading to the TCR complex down-regulation. Phosphorylated on Tyr residues after T-cell receptor triggering by LCK in association with CD4/CD8.

The protein localises to the cell membrane. Part of the TCR-CD3 complex present on T-lymphocyte cell surface that plays an essential role in adaptive immune response. When antigen presenting cells (APCs) activate T-cell receptor (TCR), TCR-mediated signals are transmitted across the cell membrane by the CD3 chains CD3D, CD3E, CD3G and CD3Z. All CD3 chains contain immunoreceptor tyrosine-based activation motifs (ITAMs) in their cytoplasmic domain. Upon TCR engagement, these motifs become phosphorylated by Src family protein tyrosine kinases LCK and FYN, resulting in the activation of downstream signaling pathways. In addition to this role of signal transduction in T-cell activation, CD3G plays an essential role in the dynamic regulation of TCR expression at the cell surface. Indeed, constitutive TCR cycling is dependent on the di-leucine-based (diL) receptor-sorting motif present in CD3G. The polypeptide is T-cell surface glycoprotein CD3 gamma chain (CD3G) (Bos taurus (Bovine)).